A 174-amino-acid polypeptide reads, in one-letter code: Type II secretion system protein M (174 aa).

Over 1 to 32 the chain is Cytoplasmic; sequence MKVMTQFHERLRAQAETSQLAIRWRGLPARDR. A helical transmembrane segment spans residues 33–52; that stretch reads LALLWLGAFLLLVVLYLALW. The Periplasmic portion of the chain corresponds to 53-174; that stretch reads RPAERHLQSA…VSARLSLRVE (122 aa).

It belongs to the GSP M family. Type II secretion system is composed of four main components: the outer membrane complex, the inner membrane complex, the cytoplasmic secretion ATPase and the periplasm-spanning pseudopilus. Forms homodimers. Interacts with XcpY/GspL. Interacts with XcpR/GspE and XcpS/GspF.

The protein localises to the cell inner membrane. Its function is as follows. Inner membrane component of the type II secretion system required for the energy-dependent secretion of extracellular factors such as proteases and toxins from the periplasm. Plays a role in the complex assembly and recruits XcpY resulting in a stable complex in the inner membrane. Provides thus a link between the energy-providing XcpR protein in the cytoplasm and the rest of the T2SS machinery. This is Type II secretion system protein M (xcpZ) from Pseudomonas aeruginosa (strain ATCC 15692 / DSM 22644 / CIP 104116 / JCM 14847 / LMG 12228 / 1C / PRS 101 / PAO1).